A 442-amino-acid chain; its full sequence is F-box/FBD/LRR-repeat protein At3g14710 (442 aa).

The region spanning 26–73 is the F-box domain; the sequence is DKFSSLLESVVSIILSQLPTAEAVSTSVLSKSWKNIWTNITDLHFDDT. LRR repeat units lie at residues 126-147, 151-172, and 173-194; these read NLQR…SLFP, SLVE…AILP, and NLKF…SKNL. The FBD domain occupies 370–414; that stretch reads VESPDCVTTMLKVLQIRNFKPNRLQISVLRYVLDNAEILGSVILS.

The chain is F-box/FBD/LRR-repeat protein At3g14710 from Arabidopsis thaliana (Mouse-ear cress).